The chain runs to 88 residues: uncharacterized protein (88 aa).

The first 23 residues, 1–23 (MAVSGLRLTIVWGLLVLILTCQA), serve as a signal peptide directing secretion. Residues 25 to 40 (DKPEGKPDEQPHDSGK) show a composition bias toward basic and acidic residues. The interval 25–45 (DKPEGKPDEQPHDSGKNSEPA) is disordered.

The protein resides in the secreted. This is an uncharacterized protein from Bos taurus (Bovine).